A 56-amino-acid polypeptide reads, in one-letter code: Large ribosomal subunit protein bL33 (56 aa).

Basic and acidic residues predominate over residues 1-12; sequence MASKGGRDKIKL. Positions 1-30 are disordered; that stretch reads MASKGGRDKIKLESTAGTGHFYTTTKNKRT. Positions 15-25 are enriched in polar residues; that stretch reads TAGTGHFYTTT.

It belongs to the bacterial ribosomal protein bL33 family.

The sequence is that of Large ribosomal subunit protein bL33 from Ralstonia nicotianae (strain ATCC BAA-1114 / GMI1000) (Ralstonia solanacearum).